Here is a 285-residue protein sequence, read N- to C-terminus: Phosphatidylserine decarboxylase proenzyme (285 aa).

Residues Asp-96, His-152, and Ser-250 each act as charge relay system; for autoendoproteolytic cleavage activity in the active site. The Schiff-base intermediate with substrate; via pyruvic acid; for decarboxylase activity role is filled by Ser-250. At Ser-250 the chain carries Pyruvic acid (Ser); by autocatalysis.

This sequence belongs to the phosphatidylserine decarboxylase family. PSD-B subfamily. Prokaryotic type I sub-subfamily. As to quaternary structure, heterodimer of a large membrane-associated beta subunit and a small pyruvoyl-containing alpha subunit. Requires pyruvate as cofactor. In terms of processing, is synthesized initially as an inactive proenzyme. Formation of the active enzyme involves a self-maturation process in which the active site pyruvoyl group is generated from an internal serine residue via an autocatalytic post-translational modification. Two non-identical subunits are generated from the proenzyme in this reaction, and the pyruvate is formed at the N-terminus of the alpha chain, which is derived from the carboxyl end of the proenzyme. The autoendoproteolytic cleavage occurs by a canonical serine protease mechanism, in which the side chain hydroxyl group of the serine supplies its oxygen atom to form the C-terminus of the beta chain, while the remainder of the serine residue undergoes an oxidative deamination to produce ammonia and the pyruvoyl prosthetic group on the alpha chain. During this reaction, the Ser that is part of the protease active site of the proenzyme becomes the pyruvoyl prosthetic group, which constitutes an essential element of the active site of the mature decarboxylase.

The protein localises to the cell membrane. It carries out the reaction a 1,2-diacyl-sn-glycero-3-phospho-L-serine + H(+) = a 1,2-diacyl-sn-glycero-3-phosphoethanolamine + CO2. It participates in phospholipid metabolism; phosphatidylethanolamine biosynthesis; phosphatidylethanolamine from CDP-diacylglycerol: step 2/2. In terms of biological role, catalyzes the formation of phosphatidylethanolamine (PtdEtn) from phosphatidylserine (PtdSer). This Acinetobacter baylyi (strain ATCC 33305 / BD413 / ADP1) protein is Phosphatidylserine decarboxylase proenzyme.